The following is a 294-amino-acid chain: Ribosomal protein L11 methyltransferase (294 aa).

S-adenosyl-L-methionine contacts are provided by Thr-145, Gly-166, Asp-188, and Asn-230.

The protein belongs to the methyltransferase superfamily. PrmA family.

It localises to the cytoplasm. It carries out the reaction L-lysyl-[protein] + 3 S-adenosyl-L-methionine = N(6),N(6),N(6)-trimethyl-L-lysyl-[protein] + 3 S-adenosyl-L-homocysteine + 3 H(+). Functionally, methylates ribosomal protein L11. The chain is Ribosomal protein L11 methyltransferase from Glaesserella parasuis serovar 5 (strain SH0165) (Haemophilus parasuis).